The chain runs to 399 residues: Glycosyltransferase BC10 (399 aa).

The Cytoplasmic portion of the chain corresponds to 1–17 (MKPPRRWMYGRGGGKGK). Residues 18 to 38 (PAGLLLLGVFLCLSVVLLLLL) traverse the membrane as a helical; Signal-anchor for type II membrane protein segment. At 39-399 (HGSSPSLEGE…LIAANGASTM (361 aa)) the chain is on the lumenal side. N-linked (GlcNAc...) asparagine glycosylation is found at Asn142 and Asn188.

This sequence belongs to the glycosyltransferase 14 family. As to expression, expressed in roots, culms, leaves and panicles. Expressed in vascular bundles of leaf sheaths and stems where sclerenchyma cells are developing. Expressed in mechanical tissues of young organs, such as young leaf sheaths, stems and tiller buds.

The protein resides in the membrane. Its function is as follows. Glycosyltransferase required for the regulation of cellulose biosynthesis in the cell wall. Required for the biosynthesis of hexoses (glucose, mannose and galactose) in both cellulosic and non-cellulosic (pectins and hemicelluloses) components of cell walls. Required for the formation of arabinogalactan proteins which contribute to the strengthening of cell walls. Possesses low glycosyltransferase activity. This chain is Glycosyltransferase BC10, found in Oryza sativa subsp. japonica (Rice).